A 557-amino-acid polypeptide reads, in one-letter code: TBCC domain-containing protein 1 (557 aa).

Residues 290–435 (TTKRAKIACN…LEDHMARTGL (146 aa)) form the C-CAP/cofactor C-like domain.

It belongs to the TBCC family.

Its subcellular location is the cytoplasm. The protein resides in the cytoskeleton. The protein localises to the microtubule organizing center. It localises to the centrosome. It is found in the spindle pole. Its function is as follows. Plays a role in the regulation of centrosome and Golgi apparatus positioning, with consequences on cell shape and cell migration. This chain is TBCC domain-containing protein 1 (TBCCD1), found in Homo sapiens (Human).